Reading from the N-terminus, the 196-residue chain is Prefoldin subunit 3 (196 aa).

Ala-2 bears the N-acetylalanine mark. Lys-58 is modified (N6-acetyllysine).

The protein belongs to the prefoldin subunit alpha family. Heterohexamer of two PFD-alpha type and four PFD-beta type subunits. Binds to the C-terminal part of VHL.

The protein localises to the cytoplasm. It localises to the nucleus. In terms of biological role, binds specifically to cytosolic chaperonin (c-CPN) and transfers target proteins to it. Binds to nascent polypeptide chain and promotes folding in an environment in which there are many competing pathways for nonnative proteins. The sequence is that of Prefoldin subunit 3 (Vbp1) from Mus musculus (Mouse).